We begin with the raw amino-acid sequence, 568 residues long: Putative DEAD-box RNA helicase HEL64 (568 aa).

The disordered stretch occupies residues 1–34 (MEETYSPFTGRQGQYNQGYNGGGRRDSRGGMGER). A compositionally biased stretch (basic and acidic residues) spans 23 to 34 (GRRDSRGGMGER). Positions 102–130 (FDHLCGIVPPYLLKKLTAQNFTAPTPVQA) match the Q motif motif. The 175-residue stretch at 133-307 (WPVLLSGRDL…AEFQKQWIRI (175 aa)) folds into the Helicase ATP-binding domain. 146–153 (AKTGSGKT) contributes to the ATP binding site. A DEAD box motif is present at residues 255–258 (DEAD). A Helicase C-terminal domain is found at 335-483 (ELRKLMQEHR…EIPDWMIEWN (149 aa)).

The protein belongs to the DEAD box helicase family. DDX5/DBP2 subfamily.

It localises to the nucleus. The catalysed reaction is ATP + H2O = ADP + phosphate + H(+). The protein is Putative DEAD-box RNA helicase HEL64 (HEL64) of Trypanosoma brucei brucei.